A 450-amino-acid polypeptide reads, in one-letter code: tRNA modification GTPase MnmE (450 aa).

R24, E82, and K121 together coordinate (6S)-5-formyl-5,6,7,8-tetrahydrofolate. A TrmE-type G domain is found at 218–375; sequence GMHVVLVGQP…LRQVLLEAVG (158 aa). Residue N228 coordinates K(+). GTP contacts are provided by residues 228 to 233, 247 to 253, 272 to 275, and 356 to 358; these read NVGKSS, TDIAGTT, DTAG, and SAR. S232 is a Mg(2+) binding site. Residues T247, I249, and T252 each contribute to the K(+) site. Mg(2+) is bound at residue T253. K450 provides a ligand contact to (6S)-5-formyl-5,6,7,8-tetrahydrofolate.

Belongs to the TRAFAC class TrmE-Era-EngA-EngB-Septin-like GTPase superfamily. TrmE GTPase family. As to quaternary structure, homodimer. Heterotetramer of two MnmE and two MnmG subunits. Requires K(+) as cofactor.

The protein localises to the cytoplasm. Its function is as follows. Exhibits a very high intrinsic GTPase hydrolysis rate. Involved in the addition of a carboxymethylaminomethyl (cmnm) group at the wobble position (U34) of certain tRNAs, forming tRNA-cmnm(5)s(2)U34. This Laribacter hongkongensis (strain HLHK9) protein is tRNA modification GTPase MnmE.